The primary structure comprises 128 residues: Fluoride-specific ion channel FluC (128 aa).

The next 4 helical transmembrane spans lie at 3-23, 33-53, 69-89, and 99-119; these read LYALTAIGAGAALGAWLRWWF, TLPLGTLAANLTGGYLIGAAI, FAITGFLGGLTTFSTFSAETV, and WTFVIIFSHLTGSLVMTILGI. Na(+) contacts are provided by glycine 76 and threonine 79.

Belongs to the fluoride channel Fluc/FEX (TC 1.A.43) family.

The protein resides in the cell inner membrane. The enzyme catalyses fluoride(in) = fluoride(out). Its activity is regulated as follows. Na(+) is not transported, but it plays an essential structural role and its presence is essential for fluoride channel function. In terms of biological role, fluoride-specific ion channel. Important for reducing fluoride concentration in the cell, thus reducing its toxicity. This Nitrosospira multiformis (strain ATCC 25196 / NCIMB 11849 / C 71) protein is Fluoride-specific ion channel FluC.